Here is a 78-residue protein sequence, read N- to C-terminus: Protein EcdD (78 aa).

Functionally, involved in the non-oxidative decarboxylation and detoxification of phenolic derivatives under anaerobic conditions, however the precise biochemical function in metabolism of phenolic acid is unknown. This is Protein EcdD from Escherichia coli O157:H7.